Reading from the N-terminus, the 242-residue chain is uncharacterized protein (242 aa).

The span at Met-1–Gln-11 shows a compositional bias: low complexity. Residues Met-1–Val-45 are disordered.

This sequence to U.parvum UU171.

This is an uncharacterized protein from Ureaplasma parvum serovar 3 (strain ATCC 700970).